The following is a 195-amino-acid chain: Insertion element IS136 uncharacterized protein Atu4601 (195 aa).

Positions Met-25–Ser-194 constitute an Integrase catalytic domain.

This chain is Insertion element IS136 uncharacterized protein Atu4601, found in Agrobacterium fabrum (strain C58 / ATCC 33970) (Agrobacterium tumefaciens (strain C58)).